The following is a 284-amino-acid chain: MGQSTLIRAKVGDRFSIGDGCPLTLFGGPCVIEGEDFSLKMAESIAKVCDRLGVQFVFKSSFDKANRTSIGSFRGYGLEEGLRILERVKTELGLPVLTDIHESQQAATVAEVVDILQIPAFLCRQTDLLLAAAATGRTVNVKKAQFLAPWDMKNVVNKLRQGGAENLLLTERGSCFGYNALVVDFRSLPLMRELGCPVVFDATHSVQIPGGAGDRSSGQREFVPVLARAAAAVGIDALFMEIHENPDQALSDGPNMIRLADLEATLRHILRVREAVAEPIGASA.

Belongs to the KdsA family.

It localises to the cytoplasm. The enzyme catalyses D-arabinose 5-phosphate + phosphoenolpyruvate + H2O = 3-deoxy-alpha-D-manno-2-octulosonate-8-phosphate + phosphate. The protein operates within carbohydrate biosynthesis; 3-deoxy-D-manno-octulosonate biosynthesis; 3-deoxy-D-manno-octulosonate from D-ribulose 5-phosphate: step 2/3. Its pathway is bacterial outer membrane biogenesis; lipopolysaccharide biosynthesis. This is 2-dehydro-3-deoxyphosphooctonate aldolase from Synechococcus sp. (strain ATCC 27144 / PCC 6301 / SAUG 1402/1) (Anacystis nidulans).